The chain runs to 88 residues: Small ribosomal subunit protein uS17 (88 aa).

It belongs to the universal ribosomal protein uS17 family. Part of the 30S ribosomal subunit.

One of the primary rRNA binding proteins, it binds specifically to the 5'-end of 16S ribosomal RNA. The protein is Small ribosomal subunit protein uS17 of Teredinibacter turnerae (strain ATCC 39867 / T7901).